An 825-amino-acid chain; its full sequence is Lon protease (825 aa).

A Lon N-terminal domain is found at 41–237 (LPIIFIPNTI…KVIQLLLEQK (197 aa)). 388 to 395 (GPPGTGKT) provides a ligand contact to ATP. The region spanning 625-805 (SNPPGVVTGL…DEVLYEALGL (181 aa)) is the Lon proteolytic domain. Catalysis depends on residues serine 711 and lysine 754.

It belongs to the peptidase S16 family. In terms of assembly, homohexamer. Organized in a ring with a central cavity.

The protein resides in the cytoplasm. It catalyses the reaction Hydrolysis of proteins in presence of ATP.. Functionally, ATP-dependent serine protease that mediates the selective degradation of mutant and abnormal proteins as well as certain short-lived regulatory proteins. Required for cellular homeostasis and for survival from DNA damage and developmental changes induced by stress. Degrades polypeptides processively to yield small peptide fragments that are 5 to 10 amino acids long. Binds to DNA in a double-stranded, site-specific manner. This is Lon protease from Methanosphaera stadtmanae (strain ATCC 43021 / DSM 3091 / JCM 11832 / MCB-3).